The primary structure comprises 202 residues: Adenylyl-sulfate kinase (202 aa).

Residue 31–38 participates in ATP binding; sequence GLSASGKS. S105 acts as the Phosphoserine intermediate in catalysis.

This sequence belongs to the APS kinase family.

The enzyme catalyses adenosine 5'-phosphosulfate + ATP = 3'-phosphoadenylyl sulfate + ADP + H(+). Its pathway is sulfur metabolism; hydrogen sulfide biosynthesis; sulfite from sulfate: step 2/3. Its function is as follows. Catalyzes the synthesis of activated sulfate. This chain is Adenylyl-sulfate kinase (MET14), found in Saccharomyces cerevisiae (strain ATCC 204508 / S288c) (Baker's yeast).